The chain runs to 643 residues: Protein THEMIS2 (643 aa).

2 CABIT regions span residues 1–238 (MEPV…TASS) and 239–514 (RHVH…KAKG). A disordered region spans residues 546–631 (EIQAPPPRPP…RQDLDDDEHD (86 aa)). Phosphothreonine is present on T593. The segment covering 609–619 (PAHRKGHRPAK) has biased composition (basic residues). Y632 carries the phosphotyrosine modification.

It belongs to the themis family. In terms of assembly, interacts with VAV1. Interacts with LAT. Interacts constitutively with GRB2, LYN and PLCG2; these interactions increase the activation of PLCG2 and its downstream pathways following B cell receptor stimulation. Phosphorylation at Tyr-632 is induced by LPS. Phosphorylated by Src kinases (Lck or Fyn) following BCR engagement. As to expression, expressed in different endometrial adenocarcinoma cell lines and various other cell lines apart from the prostate cell line LNCaP and the ovarian cancer cell line BG1.

Its subcellular location is the nucleus. It localises to the cytoplasm. Its function is as follows. May constitute a control point in macrophage inflammatory response, promoting LPS-induced TLR4-mediated TNF production. Determines the threshold for activation of B cells by low-affinity and low-avidity ligands via PLCG2 activation and its downstream pathways. The chain is Protein THEMIS2 from Homo sapiens (Human).